The primary structure comprises 546 residues: Chaperonin GroEL 1 (546 aa).

ATP is bound by residues 29–32 (TLGP), 86–90 (DGTTT), Gly414, and Asp499.

It belongs to the chaperonin (HSP60) family. Forms a cylinder of 14 subunits composed of two heptameric rings stacked back-to-back. Interacts with the co-chaperonin GroES.

It is found in the cytoplasm. The enzyme catalyses ATP + H2O + a folded polypeptide = ADP + phosphate + an unfolded polypeptide.. Its function is as follows. Together with its co-chaperonin GroES, plays an essential role in assisting protein folding. The GroEL-GroES system forms a nano-cage that allows encapsulation of the non-native substrate proteins and provides a physical environment optimized to promote and accelerate protein folding. In Roseiflexus sp. (strain RS-1), this protein is Chaperonin GroEL 1.